A 386-amino-acid chain; its full sequence is Glucose-1-phosphate adenylyltransferase (386 aa).

Alpha-D-glucose 1-phosphate contacts are provided by residues Y100, G165, 180 to 181, and S191; that span reads EK.

Belongs to the bacterial/plant glucose-1-phosphate adenylyltransferase family. Homotetramer.

It catalyses the reaction alpha-D-glucose 1-phosphate + ATP + H(+) = ADP-alpha-D-glucose + diphosphate. The protein operates within glycan biosynthesis; glycogen biosynthesis. Functionally, involved in the biosynthesis of ADP-glucose, a building block required for the elongation reactions to produce glycogen. Catalyzes the reaction between ATP and alpha-D-glucose 1-phosphate (G1P) to produce pyrophosphate and ADP-Glc. The chain is Glucose-1-phosphate adenylyltransferase from Clostridium beijerinckii (strain ATCC 51743 / NCIMB 8052) (Clostridium acetobutylicum).